Reading from the N-terminus, the 759-residue chain is Catalase-peroxidase (759 aa).

The segment at 1 to 24 (MTQDKCPFKEQPSQPNFAGGGTSN) is disordered. Positions 96–242 (WHSAGTYRVF…LAAAHMGLIY (147 aa)) form a cross-link, tryptophyl-tyrosyl-methioninium (Trp-Tyr) (with M-268). The active-site Proton acceptor is His-97. Positions 242–268 (YVNPEGPDGNPDPIAAAHDIRDTFGRM) form a cross-link, tryptophyl-tyrosyl-methioninium (Tyr-Met) (with W-96). His-283 provides a ligand contact to heme b.

The protein belongs to the peroxidase family. Peroxidase/catalase subfamily. Homodimer or homotetramer. The cofactor is heme b. In terms of processing, formation of the three residue Trp-Tyr-Met cross-link is important for the catalase, but not the peroxidase activity of the enzyme.

The protein localises to the cytoplasm. It carries out the reaction H2O2 + AH2 = A + 2 H2O. The enzyme catalyses 2 H2O2 = O2 + 2 H2O. Its function is as follows. Bifunctional enzyme with both catalase and broad-spectrum peroxidase activity. The chain is Catalase-peroxidase from Neosartorya fischeri (strain ATCC 1020 / DSM 3700 / CBS 544.65 / FGSC A1164 / JCM 1740 / NRRL 181 / WB 181) (Aspergillus fischerianus).